A 470-amino-acid polypeptide reads, in one-letter code: MTNIITRFAPSPTGFLHIGSARTALFNYLFARHNNGKFFLRIEDTDKKRSTKEAVEAIFSGLKWLGLNWDGEVIFQSKRNSLYKEAALKLLKEGKAYYCFTRQEEIAKQRQQALKDKQHFIFNSEWRDKGPSTYPADIKPVIRLKVPREGSITIHDTLQGEIVIENSHIDDMILIRTDGTATYMLAVIVDDHDMGITHIIRGDDHLTNAARQIAIYHAFGYEVPNMTHIPLIHGADGTKLSKRHGALGVEAYKDMGYLPESLCNYLLRLGWSHGDDEIISMNQAIEWFNLASLGKSPSKLDFAKMNSINSHYLRMLDNDSLTSKTVEILKQNYKISEKEVSYIKQAMPSLIVRSETLRDLAQLAYIYLVDSPMIYSQDAKEVINNCDKDLIKQVIENLSKLEQFNKECVQNKFKEIAIYNGLKLNDIMKPVRALITGMTASPSVFEIAETLGKENILKRLKIIYYNNLNF.

The 'HIGH' region motif lies at 10-20 (PSPTGFLHIGS). The short motif at 239–243 (KLSKR) is the 'KMSKS' region element. K242 is a binding site for ATP.

Belongs to the class-I aminoacyl-tRNA synthetase family. Glutamate--tRNA ligase type 1 subfamily. In terms of assembly, monomer.

It localises to the cytoplasm. It catalyses the reaction tRNA(Glu) + L-glutamate + ATP = L-glutamyl-tRNA(Glu) + AMP + diphosphate. Functionally, catalyzes the attachment of glutamate to tRNA(Glu) in a two-step reaction: glutamate is first activated by ATP to form Glu-AMP and then transferred to the acceptor end of tRNA(Glu). In Rickettsia prowazekii (strain Madrid E), this protein is Glutamate--tRNA ligase 2.